The following is a 203-amino-acid chain: Anti-sigma-W factor RsiW (203 aa).

The Cytoplasmic segment spans residues 1–86 (MECPKEIVLL…TARLRRFLHR (86 aa)). Positions 30, 34, and 37 each coordinate Zn(2+). A helical membrane pass occupies residues 87 to 103 (HPLLTAASLFLALTLGS). Residues 104–203 (LASSWGERGA…RFNRALQSIE (100 aa)) lie on the Extracellular side of the membrane.

This sequence belongs to the zinc-associated anti-sigma factor (ZAS) superfamily. Anti-sigma-W factor family. The cofactor is Zn(2+). In terms of processing, is processed by three successive proteolytic events. First, the extracellular region of RsiW is cleaved by PrsW (Site-1 cleavage) in response to cell envelope stresses. Next, it undergoes cleavage at an intramembrane site (Site-2 cleavage) mediated by RasP. This cleavage uncovers a cryptic proteolytic tag with conserved alanine residues in the transmembrane segment, that is recognized mainly by the ClpXP protease, which completely degrades the protein in the cytoplasm and leads to the induction of the sigma-W-controlled genes.

The protein localises to the membrane. Is the anti-sigma factor for SigW. The presence of RsiW leads to the inactivation of SigW, and its proteolytic destruction to sigma-W activation. The chain is Anti-sigma-W factor RsiW (rsiW) from Geobacillus kaustophilus (strain HTA426).